Here is a 601-residue protein sequence, read N- to C-terminus: Elongation factor 4 (601 aa).

Residues 6-188 (QCIRNFSIIA…AVVAKVPPPQ (183 aa)) enclose the tr-type G domain. Residues 18–23 (DHGKST) and 135–138 (NKID) each bind GTP.

Belongs to the TRAFAC class translation factor GTPase superfamily. Classic translation factor GTPase family. LepA subfamily.

Its subcellular location is the cell membrane. It carries out the reaction GTP + H2O = GDP + phosphate + H(+). In terms of biological role, required for accurate and efficient protein synthesis under certain stress conditions. May act as a fidelity factor of the translation reaction, by catalyzing a one-codon backward translocation of tRNAs on improperly translocated ribosomes. Back-translocation proceeds from a post-translocation (POST) complex to a pre-translocation (PRE) complex, thus giving elongation factor G a second chance to translocate the tRNAs correctly. Binds to ribosomes in a GTP-dependent manner. This Desulfitobacterium hafniense (strain DSM 10664 / DCB-2) protein is Elongation factor 4.